A 339-amino-acid chain; its full sequence is DNA-directed RNA polymerase subunit alpha (339 aa).

Residues 1-235 (MVLQKNWQSL…DQLQLFINFD (235 aa)) are alpha N-terminal domain (alpha-NTD). An alpha C-terminal domain (alpha-CTD) region spans residues 251–339 (FNRNLLRKVD…DLAKRLDETF (89 aa)).

Belongs to the RNA polymerase alpha chain family. As to quaternary structure, homodimer. The RNAP catalytic core consists of 2 alpha, 1 beta, 1 beta' and 1 omega subunit. When a sigma factor is associated with the core the holoenzyme is formed, which can initiate transcription.

The catalysed reaction is RNA(n) + a ribonucleoside 5'-triphosphate = RNA(n+1) + diphosphate. Its function is as follows. DNA-dependent RNA polymerase catalyzes the transcription of DNA into RNA using the four ribonucleoside triphosphates as substrates. This is DNA-directed RNA polymerase subunit alpha from Gluconobacter oxydans (strain 621H) (Gluconobacter suboxydans).